The primary structure comprises 1011 residues: E3 ubiquitin-protein ligase mib1 (1011 aa).

Residues 6–74 (NNRVMVEGVG…AYDLRIMDSA (69 aa)) enclose the MIB/HERC2 1 domain. The segment at 80–132 (HDGTMCDTCRQQPIIGIRWKCAECTNYDLCTVCYHGDKHHLRHRFYRITTPGS) adopts a ZZ-type zinc-finger fold. Zn(2+)-binding residues include Cys-85, Cys-88, Cys-100, Cys-103, Cys-109, Cys-112, His-118, and His-122. An MIB/HERC2 2 domain is found at 143-221 (SKKITARGIF…MSDLKCVQDA (79 aa)). ANK repeat units follow at residues 430-460 (DLNE…DVNG), 463-492 (AGHT…DVEA), 496-525 (DGDR…DLNA), 529-558 (RRQT…HPSL), 562-591 (EGDT…DVTI), 595-627 (NGFN…IVDE), 631-661 (DGYT…NLDI), 665-694 (NQQT…KLDI), and 698-729 (DGDT…KVDT). RING-type zinc fingers lie at residues 820–855 (CMVC…LLCK) and 867–902 (CVVC…VQCR). Residues 936–963 (QKDKDNTNVNADVQKLQQQLQDIKEQTM) are a coiled coil. Residues 964-997 (CPVCLDRLKNMIFMCGHGTCQLCGDRMSECPICR) form an RING-type 3 zinc finger.

The protein localises to the cytoplasm. Its subcellular location is the cytoskeleton. The protein resides in the microtubule organizing center. It is found in the centrosome. It localises to the centriolar satellite. The enzyme catalyses S-ubiquitinyl-[E2 ubiquitin-conjugating enzyme]-L-cysteine + [acceptor protein]-L-lysine = [E2 ubiquitin-conjugating enzyme]-L-cysteine + N(6)-ubiquitinyl-[acceptor protein]-L-lysine.. Its pathway is protein modification; protein ubiquitination. In terms of biological role, E3 ubiquitin-protein ligase that mediates ubiquitination of Delta receptors, which act as ligands of Notch proteins. Positively regulates the Delta-mediated Notch signaling by ubiquitinating the intracellular domain of Delta, leading to endocytosis of Delta receptors. In Xenopus laevis (African clawed frog), this protein is E3 ubiquitin-protein ligase mib1 (mib1).